Reading from the N-terminus, the 256-residue chain is Isoprenyl transferase (256 aa).

The active site involves Asp33. Asp33 contacts Mg(2+). Substrate-binding positions include 34 to 37 (GNGR), Trp38, Arg46, His50, and 78 to 80 (STE). The active-site Proton acceptor is the Asn81. Residues Trp82, Arg84, Arg201, and 207 to 209 (RIS) contribute to the substrate site. Mg(2+) is bound at residue Glu220.

This sequence belongs to the UPP synthase family. Homodimer. The cofactor is Mg(2+).

Functionally, catalyzes the condensation of isopentenyl diphosphate (IPP) with allylic pyrophosphates generating different type of terpenoids. The protein is Isoprenyl transferase of Staphylococcus haemolyticus (strain JCSC1435).